Here is a 114-residue protein sequence, read N- to C-terminus: Small ribosomal subunit protein bS16 (114 aa).

The tract at residues 87–114 (AFREQPVQSAPKKKAQERAAERAKAAEA) is disordered. A compositionally biased stretch (basic and acidic residues) spans 100 to 114 (KAQERAAERAKAAEA).

Belongs to the bacterial ribosomal protein bS16 family.

This is Small ribosomal subunit protein bS16 from Acidiphilium cryptum (strain JF-5).